Reading from the N-terminus, the 283-residue chain is MRIIETVSEMQQQADDWRRAGKRIGFVPTMGYFHEGHLMLMRKVRGEADMVVASIFVNPAQFGPNEDLATYPRDLDRDLRLAGEVGVDVAFVPQVGEMYPDGYQTYVEVTKVTAPLCGRSRPLFFRGVATVVVKLFHIVKPHVAVFGEKDYQQLVTIRRMVKDLNLDIEILGHPIVREPDDLAMSSRNKYLTPEQRPLALRLSRALKAARARVALGERNGSVILKEVKELLDAGGEVRIDYAELRDPATMEEVGSMDGPSLLALAVFVGTTRLIDNCILRPAA.

30–37 (MGYFHEGH) contributes to the ATP binding site. H37 (proton donor) is an active-site residue. A (R)-pantoate-binding site is contributed by Q61. Position 61 (Q61) interacts with beta-alanine. Position 147–150 (147–150 (GEKD)) interacts with ATP. Q153 lines the (R)-pantoate pocket. Residues V176 and 184-187 (MSSR) each bind ATP.

This sequence belongs to the pantothenate synthetase family. As to quaternary structure, homodimer.

It is found in the cytoplasm. It carries out the reaction (R)-pantoate + beta-alanine + ATP = (R)-pantothenate + AMP + diphosphate + H(+). Its pathway is cofactor biosynthesis; (R)-pantothenate biosynthesis; (R)-pantothenate from (R)-pantoate and beta-alanine: step 1/1. Its function is as follows. Catalyzes the condensation of pantoate with beta-alanine in an ATP-dependent reaction via a pantoyl-adenylate intermediate. The chain is Pantothenate synthetase from Syntrophobacter fumaroxidans (strain DSM 10017 / MPOB).